The chain runs to 547 residues: Chaperonin GroEL (547 aa).

Residues 30-33, lysine 51, 87-91, glycine 415, 479-481, and aspartate 495 each bind ATP; these read TLGP, DGTTT, and NAA. Residues 526-547 form a disordered region; sequence KEEKSDLSVPPQGGMGGMGGMM. Residues 538-547 show a composition bias toward gly residues; it reads GGMGGMGGMM.

The protein belongs to the chaperonin (HSP60) family. As to quaternary structure, forms a cylinder of 14 subunits composed of two heptameric rings stacked back-to-back. Interacts with the co-chaperonin GroES.

Its subcellular location is the cytoplasm. The catalysed reaction is ATP + H2O + a folded polypeptide = ADP + phosphate + an unfolded polypeptide.. Together with its co-chaperonin GroES, plays an essential role in assisting protein folding. The GroEL-GroES system forms a nano-cage that allows encapsulation of the non-native substrate proteins and provides a physical environment optimized to promote and accelerate protein folding. The chain is Chaperonin GroEL from Buchnera aphidicola subsp. Tetraneura caerulescens.